Reading from the N-terminus, the 1304-residue chain is Probable inactive serine/threonine-protein kinase fnkC (1304 aa).

One can recognise a Protein kinase domain in the interval 33–402 (FEIIRILKKD…TNLLLTHKFI (370 aa)). ATP contacts are provided by residues 39–47 (LKKDEFSTT) and lysine 68. The disordered stretch occupies residues 208–277 (KDNNNNNNNN…EAEGGGGGGE (70 aa)). The span at 210–269 (NNNNNNNNNNNNNNNNNNNNNNNNNNNNNNANNSNNNTLNNLSIVNNNSSSSSNDNSSEA) shows a compositional bias: low complexity. 5 FNIP repeats span residues 514-556 (HSKS…LGSD), 710-753 (FNQL…FGRC), 754-797 (FNQP…FGSQ), 798-841 (YNQP…FGES), and 900-943 (YNDI…FGCD). 2 consecutive MATH domains span residues 1025–1154 (QGSW…RIDA) and 1172–1291 (NQAF…NVSI).

Belongs to the protein kinase superfamily. STE Ser/Thr protein kinase family.

This chain is Probable inactive serine/threonine-protein kinase fnkC (fnkC), found in Dictyostelium discoideum (Social amoeba).